The following is a 1151-amino-acid chain: Calcium-activated potassium channel subunit alpha-1 (1151 aa).

The disordered stretch occupies residues 1–36; that stretch reads MSSNIHANHLSLDASSSSSSSSSSSSSSSSSSSVHE. Topologically, residues 1–59 are extracellular; it reads MSSNIHANHLSLDASSSSSSSSSSSSSSSSSSSVHEPKMDALIIPVTMEVPCDSRGQRM. A compositionally biased stretch (low complexity) spans 15–33; it reads SSSSSSSSSSSSSSSSSSS. The helical transmembrane segment at 60-80 threads the bilayer; the sequence is WWAFLASSMVTFFGGLFIILL. Over 81-151 the chain is Cytoplasmic; that stretch reads WRTLKYLWTV…MISAQTLTGR (71 aa). 3 S-palmitoyl cysteine lipidation sites follow: Cys91, Cys92, and Cys94. A helical membrane pass occupies residues 152 to 172; sequence VLVVLVFALSIGALVIYFIDS. Over 173-187 the chain is Extracellular; that stretch reads SNPIESCQNFYKDFT. Residues 188 to 208 traverse the membrane as a helical segment; it reads LQIDMAFNVFFLLYFGLRFIA. Residues 209–212 are Cytoplasmic-facing; it reads ANDK. The helical transmembrane segment at 213-233 threads the bilayer; the sequence is LWFWLEVNSVVDFFTVPPVFV. Residues 234 to 237 lie on the Extracellular side of the membrane; the sequence is SVYL. A helical; Voltage-sensor transmembrane segment spans residues 238–258; sequence NRSWLGLRFLRALRLIQFSEI. Residues 259 to 273 are Cytoplasmic-facing; it reads LQFLNILKTSNSIKL. The chain crosses the membrane as a helical span at residues 274-294; it reads VNLLSIFISTWLTAAGFIHLV. Residues 295-308 lie on the Extracellular side of the membrane; the sequence is ENSGDPWENFQNNQ. An intramembrane region (pore-forming) is located at residues 309 to 331; it reads ALTYWECVYLLMVTMSTVGYGDV. The Selectivity for potassium signature appears at 325 to 328; it reads TVGY. Residues 332-340 lie on the Extracellular side of the membrane; sequence YAKTTLGRL. The chain crosses the membrane as a helical span at residues 341-361; that stretch reads FMVFFILGGLAMFASYVPEII. At 362 to 1151 the chain is on the cytoplasmic side; sequence ELIGNRKKYG…KQKYVQEERL (790 aa). The region spanning 380–522 is the RCK N-terminal 1 domain; that stretch reads RKHIVVCGHI…WNWKEGDDAI (143 aa). Glu412, Gln435, and Glu437 together coordinate Mg(2+). The segment S7 stretch occupies residues 529-549; that stretch reads LGFIAQSCLAQGLSTMLANLF. Positions 586 to 606 are segment S8; that stretch reads LSFPTVCELCFVKLKLLMIAI. A heme-binding motif region spans residues 650–654; it reads CKACH. Residues 674–702 are disordered; sequence EQPSTLSPKKKQRNGGMRNSPNSSPKLMR. Thr678 carries the post-translational modification Phosphothreonine. 3 positions are modified to phosphoserine: Ser680, Ser693, and Ser697. A segment S9 region spans residues 752–772; that stretch reads VLSGHVVVCIFGDVSSALIGL. The region spanning 754-898 is the RCK N-terminal 2 domain; that stretch reads SGHVVVCIFG…MDRSSPDNSP (145 aa). Thr885 carries the post-translational modification Phosphothreonine. A phosphoserine mark is found at Ser893 and Ser897. Residues 918–940 carry the Calcium bowl motif; that stretch reads TELVNDTNVQFLDQDDDDDPDTE. Residues Gln927, Asp930, Asp933, and Asp935 each coordinate Ca(2+). The tract at residues 947–967 is segment S10; sequence FACGTAFAVSVLDSLMSATYF. Positions 1101–1126 are enriched in low complexity; it reads RASLSHSSHSSQSSSKKSSSVHSIPS. A disordered region spans residues 1101–1151; the sequence is RASLSHSSHSSQSSSKKSSSVHSIPSTANRQNRPKSRESRDKQKYVQEERL. The segment covering 1135 to 1151 has biased composition (basic and acidic residues); that stretch reads KSRESRDKQKYVQEERL. Phosphoserine is present on residues Ser1136 and Ser1139.

Belongs to the potassium channel family. Calcium-activated (TC 1.A.1.3) subfamily. KCa1.1/KCNMA1 sub-subfamily. In terms of assembly, homotetramer; which constitutes the calcium-activated potassium channel. Interacts with beta subunits KCNMB1, KCNMB2, KCNMB3 and KCNMB4. Interacts with gamma subunits LRRC26, LRRC38, LRRC52 and LRRC55. Beta and gamma subunits are accessory, and modulate its activity. Interacts with RAB11B. Post-translationally, phosphorylated. Phosphorylation by kinases such as PKA and/or PKG. In smooth muscles, phosphorylation affects its activity. Palmitoylation by ZDHHC22 and ZDHHC23 within the intracellular linker between the S0 and S1 transmembrane domains regulates localization to the plasma membrane. Depalmitoylated by LYPLA1 and LYPLAL1, leading to retard exit from the trans-Golgi network.

Its subcellular location is the cell membrane. It catalyses the reaction K(+)(in) = K(+)(out). Ethanol and carbon monoxide-bound heme increase channel activation. Heme inhibits channel activation. Potassium channel activated by both membrane depolarization or increase in cytosolic Ca(2+) that mediates export of K(+). It is also activated by the concentration of cytosolic Mg(2+). Its activation dampens the excitatory events that elevate the cytosolic Ca(2+) concentration and/or depolarize the cell membrane. It therefore contributes to repolarization of the membrane potential. Plays a key role in controlling excitability in a number of systems, such as regulation of the contraction of smooth muscle, the tuning of hair cells in the cochlea, regulation of transmitter release, and innate immunity. In smooth muscles, its activation by high level of Ca(2+), caused by ryanodine receptors in the sarcoplasmic reticulum, regulates the membrane potential. In cochlea cells, its number and kinetic properties partly determine the characteristic frequency of each hair cell and thereby helps to establish a tonotopic map. Kinetics of KCNMA1 channels are determined by alternative splicing, phosphorylation status and its combination with modulating beta subunits. Highly sensitive to both iberiotoxin (IbTx) and charybdotoxin (CTX). This is Calcium-activated potassium channel subunit alpha-1 (KCNMA1) from Macaca mulatta (Rhesus macaque).